The following is a 61-amino-acid chain: Large ribosomal subunit protein uL30 (61 aa).

It belongs to the universal ribosomal protein uL30 family. As to quaternary structure, part of the 50S ribosomal subunit.

This is Large ribosomal subunit protein uL30 from Thermobifida fusca (strain YX).